The primary structure comprises 365 residues: Putative nudix hydrolase 1 (365 aa).

Residues 72–201 enclose the Nudix hydrolase domain; sequence VNYVAAAIIL…DFIRLVDEAV (130 aa). Positions 109 to 130 match the Nudix box motif; it reads GRVEAGETIEEAVVREVKEETG. Mg(2+) contacts are provided by glutamate 124 and glutamate 128.

It belongs to the Nudix hydrolase family. Mg(2+) is required as a cofactor. Requires Mn(2+) as cofactor.

In terms of biological role, probably mediates the hydrolysis of some nucleoside diphosphate derivatives. This Caenorhabditis elegans protein is Putative nudix hydrolase 1 (ndx-1).